The sequence spans 89 residues: Acylphosphatase (89 aa).

The region spanning 4 to 89 (SYIAHISGRV…WQEHHFFSIG (86 aa)) is the Acylphosphatase-like domain. Catalysis depends on residues Arg19 and Asn37.

Belongs to the acylphosphatase family.

The enzyme catalyses an acyl phosphate + H2O = a carboxylate + phosphate + H(+). This Colwellia psychrerythraea (strain 34H / ATCC BAA-681) (Vibrio psychroerythus) protein is Acylphosphatase (acyP).